The sequence spans 151 residues: UPF0756 membrane protein HSM_1471 (151 aa).

4 helical membrane passes run 1-21 (MSLQ…LGVL), 52-72 (YGVN…IVSG), 81-101 (ALIH…AWFG), and 123-143 (ILGV…AGIL).

This sequence belongs to the UPF0756 family.

Its subcellular location is the cell membrane. The protein is UPF0756 membrane protein HSM_1471 of Histophilus somni (strain 2336) (Haemophilus somnus).